Consider the following 122-residue polypeptide: Nuclear transport factor 2A (122 aa).

Methionine 1 is subject to N-acetylmethionine. The NTF2 domain maps to 6–119 (VAKAFVEHYY…YYVFNDIFRL (114 aa)).

As to quaternary structure, interacts with RAN1. In terms of tissue distribution, expressed in roots, stems, leaves and flowers, and, at low levels, in siliques.

The protein resides in the cytoplasm. It localises to the nucleus. It is found in the nucleus envelope. Facilitates protein transport into the nucleus. Interacts with various nucleoporins and with Ran-GDP. Could be part of a multicomponent system of cytosolic factors that assemble at the pore complex during nuclear import. The protein is Nuclear transport factor 2A of Arabidopsis thaliana (Mouse-ear cress).